Consider the following 377-residue polypeptide: Nitric oxide reductase FlRd-NAD(+) reductase (377 aa).

It belongs to the FAD-dependent oxidoreductase family. The cofactor is FAD.

Its subcellular location is the cytoplasm. The enzyme catalyses 2 reduced [nitric oxide reductase rubredoxin domain] + NAD(+) + H(+) = 2 oxidized [nitric oxide reductase rubredoxin domain] + NADH. It participates in nitrogen metabolism; nitric oxide reduction. One of at least two accessory proteins for anaerobic nitric oxide (NO) reductase. Reduces the rubredoxin moiety of NO reductase. This Salmonella heidelberg (strain SL476) protein is Nitric oxide reductase FlRd-NAD(+) reductase.